The following is a 245-amino-acid chain: tRNA (guanine-N(1)-)-methyltransferase (245 aa).

S-adenosyl-L-methionine is bound by residues Gly-111 and 131–136 (IGDYVL).

Belongs to the RNA methyltransferase TrmD family. In terms of assembly, homodimer.

The protein resides in the cytoplasm. It carries out the reaction guanosine(37) in tRNA + S-adenosyl-L-methionine = N(1)-methylguanosine(37) in tRNA + S-adenosyl-L-homocysteine + H(+). Specifically methylates guanosine-37 in various tRNAs. This Caldicellulosiruptor saccharolyticus (strain ATCC 43494 / DSM 8903 / Tp8T 6331) protein is tRNA (guanine-N(1)-)-methyltransferase.